We begin with the raw amino-acid sequence, 178 residues long: UPF0228 protein MM_0401 (178 aa).

Belongs to the UPF0228 family.

The sequence is that of UPF0228 protein MM_0401 from Methanosarcina mazei (strain ATCC BAA-159 / DSM 3647 / Goe1 / Go1 / JCM 11833 / OCM 88) (Methanosarcina frisia).